A 275-amino-acid polypeptide reads, in one-letter code: Putative ABC transporter permease protein ORF2 (275 aa).

Transmembrane regions (helical) follow at residues 11-31 (YFIFLAVWTLIADVPFLFMLF), 74-94 (IAVSISVVLILIISSMAAFAF), 108-128 (LIIAGMAIPIHVTLIPIYVLT), 136-156 (TVFALIGPYVALSLPMSIFIL), 185-205 (ILLPLSAPALITVGIYNGTYL), and 239-259 (IPAIMAFLTLSLLPMLIAYIF). Residues 69–260 (LKNSVIAVSI…LPMLIAYIFG (192 aa)) form the ABC transmembrane type-1 domain.

Belongs to the binding-protein-dependent transport system permease family. MalFG subfamily.

The protein resides in the cell membrane. The chain is Putative ABC transporter permease protein ORF2 from Caldicellulosiruptor sp. (strain Rt8B.4).